We begin with the raw amino-acid sequence, 217 residues long: 3,4-dihydroxy-2-butanone 4-phosphate synthase (217 aa).

Residues 37–38, aspartate 42, 150–154, and glutamate 174 contribute to the D-ribulose 5-phosphate site; these read RE and RRGHT. Glutamate 38 contacts Mg(2+). Residue histidine 153 coordinates Mg(2+).

Belongs to the DHBP synthase family. Homodimer. The cofactor is Mg(2+). It depends on Mn(2+) as a cofactor.

The catalysed reaction is D-ribulose 5-phosphate = (2S)-2-hydroxy-3-oxobutyl phosphate + formate + H(+). Its pathway is cofactor biosynthesis; riboflavin biosynthesis; 2-hydroxy-3-oxobutyl phosphate from D-ribulose 5-phosphate: step 1/1. Its function is as follows. Catalyzes the conversion of D-ribulose 5-phosphate to formate and 3,4-dihydroxy-2-butanone 4-phosphate. In Desulforapulum autotrophicum (strain ATCC 43914 / DSM 3382 / VKM B-1955 / HRM2) (Desulfobacterium autotrophicum), this protein is 3,4-dihydroxy-2-butanone 4-phosphate synthase.